The chain runs to 836 residues: Pentatricopeptide repeat-containing protein At2g39620 (836 aa).

23 PPR repeats span residues 1–35 (MPIN…GLKP), 36–62 (HNQL…VRDP), 63–98 (GVVL…GIDP), 99–133 (DKYS…GLES), 134–164 (DVYI…MHVK), 165–199 (DVVT…CVDI), 200–230 (DHVS…VIKK), 233–263 (IFAF…VWRK), 264–298 (DESS…DVRM), 299–333 (NKVA…GLIG), 334–364 (DVSV…IEDR), 365–399 (DVVS…HIKP), 400–434 (NAVT…DIES), 435–465 (ELET…LPIK), 466–500 (DAVA…GVCP), 501–535 (DSRT…GFDS), 536–566 (ECHV…CGFE), 568–602 (STVS…KFQP), 603–637 (NAVT…GFCS), 638–668 (QTPV…ISNK), 669–703 (YIVS…ELKP), 704–734 (DSVS…MGER), and 740–770 (EVEH…MRVK). Residues 775 to 836 (VWGALLNSSR…KVPACSWIEV (62 aa)) form a type E motif; degenerate region.

This sequence belongs to the PPR family. PCMP-E subfamily.

This is Pentatricopeptide repeat-containing protein At2g39620 (PCMP-E33) from Arabidopsis thaliana (Mouse-ear cress).